The primary structure comprises 21 residues: ISDFDEYEPLNDADNNEVLDF.

The interval I1–F21 is disordered.

In terms of biological role, start or boost ecdysteroid synthesis in testis of larvae and pupae. The sequence is that of Testis ecdysiotropin peptide 1 from Lymantria dispar (Gypsy moth).